Reading from the N-terminus, the 485-residue chain is Serine/threonine-protein kinase dst4 (485 aa).

A Protein kinase domain is found at 21 to 278 (FRVLEVIGQG…AVDLLNHPFI (258 aa)). ATP contacts are provided by residues 27 to 35 (IGQGSFGVV) and Lys-50. The active-site Proton acceptor is Asp-142. Disordered regions lie at residues 304–343 (RRKKAEEEEAEEAEEGDDYDDVNGGGDERQHGSSVSSAGL), 360–424 (VMRE…GSVV), and 436–485 (SMKL…NQDD). Acidic residues predominate over residues 310–324 (EEEAEEAEEGDDYDD). The segment covering 370-393 (SNNGGTFIYNNNNNNSSKTSSSGT) has biased composition (low complexity). 2 stretches are compositionally biased toward acidic residues: residues 406–417 (DDDDDDDIEEGG) and 450–468 (SSDEEDEEDEDDEDDEEGG). The span at 474–485 (VVYTKSPVNQDD) shows a compositional bias: polar residues.

The protein belongs to the protein kinase superfamily. STE Ser/Thr protein kinase family. STE20 subfamily. The cofactor is Mg(2+).

It catalyses the reaction L-seryl-[protein] + ATP = O-phospho-L-seryl-[protein] + ADP + H(+). The enzyme catalyses L-threonyl-[protein] + ATP = O-phospho-L-threonyl-[protein] + ADP + H(+). This Dictyostelium discoideum (Social amoeba) protein is Serine/threonine-protein kinase dst4.